The primary structure comprises 390 residues: 4-hydroxycoumarin synthase 1 (390 aa).

Residue Cys161 is part of the active site.

The protein belongs to the thiolase-like superfamily. Chalcone/stilbene synthases family. As to quaternary structure, homodimer.

The catalysed reaction is 2-hydroxybenzoyl-CoA + malonyl-CoA = 4-hydroxycoumarin + CO2 + 2 CoA. Functionally, type III polyketide synthase involved preferentially in the biosynthesis of 4-hydroxycoumarin from salicoyl-CoA. Can also use benzoyl-CoA and malonyl-CoA to produce 3,5-dihydroxybiphenyl as a major product and benzoyldiacetic acid lactone as a minor side product. Can also use m-hydroxybenzoyl-CoA as substrate, producing m-hydroxybenzoyl diacetic acid lactone as a derailment product. No activity with p-hydroxybenzoyl-CoA, CoA-linked cinnamic acids or acetyl-CoA. This Sorbus aucuparia (European mountain ash) protein is 4-hydroxycoumarin synthase 1 (BIS2).